A 473-amino-acid polypeptide reads, in one-letter code: ATP synthase subunit beta (473 aa).

ATP is bound at residue 158-165 (GGAGVGKT).

This sequence belongs to the ATPase alpha/beta chains family. As to quaternary structure, F-type ATPases have 2 components, CF(1) - the catalytic core - and CF(0) - the membrane proton channel. CF(1) has five subunits: alpha(3), beta(3), gamma(1), delta(1), epsilon(1). CF(0) has three main subunits: a(1), b(2) and c(9-12). The alpha and beta chains form an alternating ring which encloses part of the gamma chain. CF(1) is attached to CF(0) by a central stalk formed by the gamma and epsilon chains, while a peripheral stalk is formed by the delta and b chains.

Its subcellular location is the cell membrane. The enzyme catalyses ATP + H2O + 4 H(+)(in) = ADP + phosphate + 5 H(+)(out). In terms of biological role, produces ATP from ADP in the presence of a proton gradient across the membrane. The catalytic sites are hosted primarily by the beta subunits. The chain is ATP synthase subunit beta from Bacillus caldotenax.